The sequence spans 364 residues: tRNA 2-selenouridine synthase (364 aa).

The Rhodanese domain maps to 14-137 (LLADTPLIDV…LRQTAIQATW (124 aa)). Residue Cys-97 is the S-selanylcysteine intermediate of the active site.

This sequence belongs to the SelU family. Monomer.

The enzyme catalyses 5-methylaminomethyl-2-thiouridine(34) in tRNA + selenophosphate + (2E)-geranyl diphosphate + H2O + H(+) = 5-methylaminomethyl-2-selenouridine(34) in tRNA + (2E)-thiogeraniol + phosphate + diphosphate. It carries out the reaction 5-methylaminomethyl-2-thiouridine(34) in tRNA + (2E)-geranyl diphosphate = 5-methylaminomethyl-S-(2E)-geranyl-thiouridine(34) in tRNA + diphosphate. It catalyses the reaction 5-methylaminomethyl-S-(2E)-geranyl-thiouridine(34) in tRNA + selenophosphate + H(+) = 5-methylaminomethyl-2-(Se-phospho)selenouridine(34) in tRNA + (2E)-thiogeraniol. The catalysed reaction is 5-methylaminomethyl-2-(Se-phospho)selenouridine(34) in tRNA + H2O = 5-methylaminomethyl-2-selenouridine(34) in tRNA + phosphate. Its function is as follows. Involved in the post-transcriptional modification of the uridine at the wobble position (U34) of tRNA(Lys), tRNA(Glu) and tRNA(Gln). Catalyzes the conversion of 2-thiouridine (S2U-RNA) to 2-selenouridine (Se2U-RNA). Acts in a two-step process involving geranylation of 2-thiouridine (S2U) to S-geranyl-2-thiouridine (geS2U) and subsequent selenation of the latter derivative to 2-selenouridine (Se2U) in the tRNA chain. The protein is tRNA 2-selenouridine synthase of Salmonella choleraesuis (strain SC-B67).